Reading from the N-terminus, the 625-residue chain is Chaperone protein HtpG (625 aa).

An a; substrate-binding region spans residues 1–337; sequence MNIQKKEVYS…SNNLPLNVSR (337 aa). Positions 338–552 are b; sequence EILQDNSITQ…SNEMSTQMAK (215 aa). The c stretch occupies residues 553–625; it reads LFSAAGQSVP…ARTNKLILEQ (73 aa).

Belongs to the heat shock protein 90 family. In terms of assembly, homodimer.

The protein localises to the cytoplasm. Its function is as follows. Molecular chaperone. Has ATPase activity. In Buchnera aphidicola subsp. Schizaphis graminum (strain Sg), this protein is Chaperone protein HtpG.